Here is a 1341-residue protein sequence, read N- to C-terminus: DNA-directed RNA polymerase subunit Rpo1N (1341 aa).

Zn(2+) contacts are provided by cysteine 62, cysteine 65, cysteine 72, histidine 75, cysteine 102, cysteine 105, cysteine 149, and cysteine 152. Mg(2+)-binding residues include aspartate 918, aspartate 920, and aspartate 922.

The protein belongs to the RNA polymerase beta' chain family. In terms of assembly, part of the RNA polymerase complex. Mg(2+) is required as a cofactor. The cofactor is Zn(2+). This protein undergoes a protein self splicing that involves a post-translational excision of the intervening region (intein) followed by peptide ligation.

It localises to the cytoplasm. The catalysed reaction is RNA(n) + a ribonucleoside 5'-triphosphate = RNA(n+1) + diphosphate. In terms of biological role, DNA-dependent RNA polymerase (RNAP) catalyzes the transcription of DNA into RNA using the four ribonucleoside triphosphates as substrates. Forms the clamp head domain. The sequence is that of DNA-directed RNA polymerase subunit Rpo1N from Methanocaldococcus jannaschii (strain ATCC 43067 / DSM 2661 / JAL-1 / JCM 10045 / NBRC 100440) (Methanococcus jannaschii).